We begin with the raw amino-acid sequence, 37 residues long: Large ribosomal subunit protein bL36c (37 aa).

The protein belongs to the bacterial ribosomal protein bL36 family.

The protein resides in the plastid. Its subcellular location is the chloroplast. The sequence is that of Large ribosomal subunit protein bL36c from Phalaenopsis aphrodite subsp. formosana (Moth orchid).